Consider the following 338-residue polypeptide: Glycerol-3-phosphate dehydrogenase [NAD(P)+] (338 aa).

Residues Ser-13, Trp-14, and Lys-108 each coordinate NADPH. Positions 108, 139, and 141 each coordinate sn-glycerol 3-phosphate. Residue Ala-143 coordinates NADPH. Positions 194, 247, 257, 258, and 259 each coordinate sn-glycerol 3-phosphate. Catalysis depends on Lys-194, which acts as the Proton acceptor. NADPH is bound at residue Arg-258. Residues Val-282 and Glu-284 each coordinate NADPH.

The protein belongs to the NAD-dependent glycerol-3-phosphate dehydrogenase family.

The protein localises to the cytoplasm. The catalysed reaction is sn-glycerol 3-phosphate + NAD(+) = dihydroxyacetone phosphate + NADH + H(+). It carries out the reaction sn-glycerol 3-phosphate + NADP(+) = dihydroxyacetone phosphate + NADPH + H(+). It functions in the pathway membrane lipid metabolism; glycerophospholipid metabolism. Catalyzes the reduction of the glycolytic intermediate dihydroxyacetone phosphate (DHAP) to sn-glycerol 3-phosphate (G3P), the key precursor for phospholipid synthesis. The polypeptide is Glycerol-3-phosphate dehydrogenase [NAD(P)+] (Listeria monocytogenes serotype 4b (strain CLIP80459)).